The following is a 240-amino-acid chain: Ribosomal RNA small subunit methyltransferase G (240 aa).

S-adenosyl-L-methionine-binding positions include Gly79, Phe84, 130–131 (AE), and Arg149.

It belongs to the methyltransferase superfamily. RNA methyltransferase RsmG family.

It localises to the cytoplasm. Functionally, specifically methylates the N7 position of a guanine in 16S rRNA. The chain is Ribosomal RNA small subunit methyltransferase G from Desulforamulus reducens (strain ATCC BAA-1160 / DSM 100696 / MI-1) (Desulfotomaculum reducens).